We begin with the raw amino-acid sequence, 575 residues long: MTTMLKGIAASSGVAVAKAYLLVQPDLSFETKTIADTANEEARLDAALATSQSELQLIKDKAVTTLGEEAASVFDAHMMVLADPDMTAQIKAVINDKKVNAESALKEVTDMFIGIFEGMTDNAYMQERAADIKDVTKRVLAHLLGVKLPSPALIDEEVIIVAEDLTPSDTAQLDKKFVKAFVTNIGGRTSHSAIMARTLEIPAVLGTNNITELVSEGQLLAVSGLTGEVILDPSTEQQSEFHKAGEAYAAQKAEWAALKDAETVTADGRHYELAANIGTPKDVEGVNDNGAEAIGLYRTEFLYMDAQDFPTEDDQYEAYKAVLEGMNGKPVVVRTMDIGGDKTLPYFDLPKEMNPFLGWRALRISLSTAGDGMFRTQLRALLRASVHGQLRIMFPMVALVTEFRAAKKIYDEEKAKLIAEGVPVADGIEVGIMIEIPAAAMLADQFAKEVDFFSIGTNDLIQYTMAADRMNEQVSYLYQPYNPSILRLINNVIKAAHAEGKWAGMCGEMAGDQTAVPLLMGMGLDEFSMSATSVLQTRSLMKRLDSKKMEELSSKALSECATMEEVIALVEEYTK.

H191 serves as the catalytic Tele-phosphohistidine intermediate. Phosphoenolpyruvate contacts are provided by R298 and R334. Positions 435 and 459 each coordinate Mg(2+). Phosphoenolpyruvate contacts are provided by residues 458 to 459 and R469; that span reads ND. Residue C506 is the Proton donor of the active site.

It belongs to the PEP-utilizing enzyme family. As to quaternary structure, homodimer. The cofactor is Mg(2+).

It localises to the cytoplasm. It carries out the reaction L-histidyl-[protein] + phosphoenolpyruvate = N(pros)-phospho-L-histidyl-[protein] + pyruvate. Its function is as follows. General (non sugar-specific) component of the phosphoenolpyruvate-dependent sugar phosphotransferase system (sugar PTS). This major carbohydrate active-transport system catalyzes the phosphorylation of incoming sugar substrates concomitantly with their translocation across the cell membrane. Enzyme I transfers the phosphoryl group from phosphoenolpyruvate (PEP) to the phosphoryl carrier protein (HPr). This Lactococcus lactis subsp. lactis (strain IL1403) (Streptococcus lactis) protein is Phosphoenolpyruvate-protein phosphotransferase (ptsI).